A 196-amino-acid chain; its full sequence is Probable nicotinate-nucleotide adenylyltransferase (196 aa).

The protein belongs to the NadD family.

The catalysed reaction is nicotinate beta-D-ribonucleotide + ATP + H(+) = deamido-NAD(+) + diphosphate. It participates in cofactor biosynthesis; NAD(+) biosynthesis; deamido-NAD(+) from nicotinate D-ribonucleotide: step 1/1. In terms of biological role, catalyzes the reversible adenylation of nicotinate mononucleotide (NaMN) to nicotinic acid adenine dinucleotide (NaAD). The sequence is that of Probable nicotinate-nucleotide adenylyltransferase from Caldicellulosiruptor saccharolyticus (strain ATCC 43494 / DSM 8903 / Tp8T 6331).